Consider the following 214-residue polypeptide: Octanoyltransferase (214 aa).

The BPL/LPL catalytic domain occupies 29-214; sequence STTPDEIWIL…EHLQKQLMPT (186 aa). Residues 69 to 76, 146 to 148, and 159 to 161 contribute to the substrate site; these read RGGEITYH, ALG, and GLA. C177 functions as the Acyl-thioester intermediate in the catalytic mechanism.

The protein belongs to the LipB family.

The protein localises to the cytoplasm. It carries out the reaction octanoyl-[ACP] + L-lysyl-[protein] = N(6)-octanoyl-L-lysyl-[protein] + holo-[ACP] + H(+). It functions in the pathway protein modification; protein lipoylation via endogenous pathway; protein N(6)-(lipoyl)lysine from octanoyl-[acyl-carrier-protein]: step 1/2. Its function is as follows. Catalyzes the transfer of endogenously produced octanoic acid from octanoyl-acyl-carrier-protein onto the lipoyl domains of lipoate-dependent enzymes. Lipoyl-ACP can also act as a substrate although octanoyl-ACP is likely to be the physiological substrate. This chain is Octanoyltransferase, found in Polynucleobacter asymbioticus (strain DSM 18221 / CIP 109841 / QLW-P1DMWA-1) (Polynucleobacter necessarius subsp. asymbioticus).